We begin with the raw amino-acid sequence, 439 residues long: Tol-Pal system protein TolB (439 aa).

Residues 1–21 form the signal peptide; that stretch reads MRFRLALSLLSLALFAAPAAA.

The protein belongs to the TolB family. As to quaternary structure, the Tol-Pal system is composed of five core proteins: the inner membrane proteins TolA, TolQ and TolR, the periplasmic protein TolB and the outer membrane protein Pal. They form a network linking the inner and outer membranes and the peptidoglycan layer.

The protein resides in the periplasm. Its function is as follows. Part of the Tol-Pal system, which plays a role in outer membrane invagination during cell division and is important for maintaining outer membrane integrity. The protein is Tol-Pal system protein TolB of Rhizorhabdus wittichii (strain DSM 6014 / CCUG 31198 / JCM 15750 / NBRC 105917 / EY 4224 / RW1) (Sphingomonas wittichii).